The chain runs to 59 residues: Large ribosomal subunit protein bL32 (59 aa).

This sequence belongs to the bacterial ribosomal protein bL32 family.

The protein is Large ribosomal subunit protein bL32 of Synechococcus sp. (strain JA-2-3B'a(2-13)) (Cyanobacteria bacterium Yellowstone B-Prime).